We begin with the raw amino-acid sequence, 324 residues long: PDZ domain-containing protein MAGIX (324 aa).

The segment at 1–26 is disordered; it reads MDSRAGNTADPRGGRRGGGLQGSRSP. The PDZ domain maps to 128–212; the sequence is SVELTRGPAG…HLCLVLQRPQ (85 aa). Positions 216–241 are enriched in basic and acidic residues; the sequence is GSRIKEVGGHRKTDRSLDPRGSRVES. Residues 216–263 are disordered; that stretch reads GSRIKEVGGHRKTDRSLDPRGSRVESRSTISPVHHRPKTRTSPRPSPE. Phosphoserine is present on Ser-261.

In Mus musculus (Mouse), this protein is PDZ domain-containing protein MAGIX (Magix).